The following is a 255-amino-acid chain: Coniferyl-alcohol dehydrogenase (255 aa).

NAD(+) contacts are provided by residues 12-17 (GVSSGI), aspartate 36, 51-52 (DL), and glycine 77. Position 117 (serine 117) interacts with substrate. Tyrosine 157 and lysine 161 together coordinate NAD(+). The active-site Proton acceptor is tyrosine 157.

Belongs to the short-chain dehydrogenases/reductases (SDR) family.

It catalyses the reaction (E)-coniferol + NADP(+) = (E)-coniferaldehyde + NADPH + H(+). In terms of biological role, catalyzes the conversion of coniferyl alcohol into coniferyl aldehyde in the eugenol degradation pathway. Specific for coniferyl alcohol; does not act on cinnamyl alcohol, 4-coumaryl alcohol or sinapyl alcohol. In Pseudomonas sp. (strain HR199 / DSM 7063), this protein is Coniferyl-alcohol dehydrogenase (calA).